The sequence spans 104 residues: Thioredoxin (104 aa).

In terms of domain architecture, Thioredoxin spans 2-104; that stretch reads AIVKVTDADF…NLAEVLDKHL (103 aa). A disulfide bridge links Cys-29 with Cys-32.

The protein belongs to the thioredoxin family.

In terms of biological role, component of the thioredoxin-thioredoxin reductase system. Participates in various redox reactions through the reversible oxidation of its active center dithiol to a disulfide and catalyzes dithiol-disulfide exchange reactions. The sequence is that of Thioredoxin (trxA) from Staphylococcus aureus (strain N315).